Reading from the N-terminus, the 186-residue chain is Protein GrpE (186 aa).

Residues 1 to 15 (MADEQQTLDQQTPEQ) are compositionally biased toward polar residues. The tract at residues 1-20 (MADEQQTLDQQTPEQPTGAA) is disordered.

Belongs to the GrpE family. As to quaternary structure, homodimer.

It is found in the cytoplasm. Functionally, participates actively in the response to hyperosmotic and heat shock by preventing the aggregation of stress-denatured proteins, in association with DnaK and GrpE. It is the nucleotide exchange factor for DnaK and may function as a thermosensor. Unfolded proteins bind initially to DnaJ; upon interaction with the DnaJ-bound protein, DnaK hydrolyzes its bound ATP, resulting in the formation of a stable complex. GrpE releases ADP from DnaK; ATP binding to DnaK triggers the release of the substrate protein, thus completing the reaction cycle. Several rounds of ATP-dependent interactions between DnaJ, DnaK and GrpE are required for fully efficient folding. This is Protein GrpE from Pseudomonas aeruginosa (strain UCBPP-PA14).